The sequence spans 378 residues: Glutamate 5-kinase (378 aa).

Lys-20 is a binding site for ATP. Ser-60, Asp-147, and Asn-159 together coordinate substrate. ATP contacts are provided by residues 179-180 (TD) and 221-227 (TGGMLTK). The region spanning 286–364 (RGRVVLDDGA…SQIARILGSM (79 aa)) is the PUA domain.

This sequence belongs to the glutamate 5-kinase family.

It is found in the cytoplasm. The enzyme catalyses L-glutamate + ATP = L-glutamyl 5-phosphate + ADP. Its pathway is amino-acid biosynthesis; L-proline biosynthesis; L-glutamate 5-semialdehyde from L-glutamate: step 1/2. Functionally, catalyzes the transfer of a phosphate group to glutamate to form L-glutamate 5-phosphate. The protein is Glutamate 5-kinase of Bordetella parapertussis (strain 12822 / ATCC BAA-587 / NCTC 13253).